The sequence spans 430 residues: Long-chain specific acyl-CoA dehydrogenase, mitochondrial (430 aa).

The transit peptide at 1–30 (MAARLLLRSLRVLSARSATLPPPSARCSHS) directs the protein to the mitochondrion. At K42 the chain carries N6-acetyllysine. 2 positions are modified to phosphoserine: S54 and S55. An N6-acetyllysine; alternate mark is found at K66 and K81. K66 and K81 each carry N6-succinyllysine; alternate. An N6-acetyllysine mark is found at K92 and K95. The residue at position 165 (K165) is an N6-succinyllysine. 170-179 (IAMTEPGAGS) contacts FAD. S179 serves as a coordination point for substrate. S191 carries the phosphoserine modification. Position 203–205 (203–205 (FIT)) interacts with FAD. 227-228 (AH) serves as a coordination point for substrate. An N6-succinyllysine modification is found at K240. Residues K254 and K279 each carry the N6-acetyllysine; alternate modification. Residues K254 and K279 each carry the N6-succinyllysine; alternate modification. Substrate-binding positions include Y282 and 289–292 (PQER). The active-site Proton acceptor is E291. R317 is a binding site for FAD. Position 318 is an N6-acetyllysine (K318). K322 bears the N6-acetyllysine; alternate mark. K322 bears the N6-succinyllysine; alternate mark. Q328 lines the FAD pocket. K358 is modified (N6-acetyllysine). Position 362 is a phosphoserine (S362). An FAD-binding site is contributed by 385-389 (QLHGG). A substrate-binding site is contributed by 412–413 (GG). 414–416 (TNE) contributes to the FAD binding site.

This sequence belongs to the acyl-CoA dehydrogenase family. As to quaternary structure, homotetramer. It depends on FAD as a cofactor. Post-translationally, acetylation at Lys-318 and Lys-322 in proximity of the cofactor-binding sites strongly reduces catalytic activity. These sites are deacetylated by SIRT3.

It is found in the mitochondrion matrix. The enzyme catalyses a long-chain 2,3-saturated fatty acyl-CoA + oxidized [electron-transfer flavoprotein] + H(+) = a long-chain (2E)-enoyl-CoA + reduced [electron-transfer flavoprotein]. It catalyses the reaction octanoyl-CoA + oxidized [electron-transfer flavoprotein] + H(+) = (2E)-octenoyl-CoA + reduced [electron-transfer flavoprotein]. It carries out the reaction decanoyl-CoA + oxidized [electron-transfer flavoprotein] + H(+) = (2E)-decenoyl-CoA + reduced [electron-transfer flavoprotein]. The catalysed reaction is dodecanoyl-CoA + oxidized [electron-transfer flavoprotein] + H(+) = (2E)-dodecenoyl-CoA + reduced [electron-transfer flavoprotein]. The enzyme catalyses tetradecanoyl-CoA + oxidized [electron-transfer flavoprotein] + H(+) = (2E)-tetradecenoyl-CoA + reduced [electron-transfer flavoprotein]. It catalyses the reaction oxidized [electron-transfer flavoprotein] + hexadecanoyl-CoA + H(+) = (2E)-hexadecenoyl-CoA + reduced [electron-transfer flavoprotein]. It carries out the reaction octadecanoyl-CoA + oxidized [electron-transfer flavoprotein] + H(+) = (2E)-octadecenoyl-CoA + reduced [electron-transfer flavoprotein]. The catalysed reaction is (5E)-tetradecenoyl-CoA + oxidized [electron-transfer flavoprotein] + H(+) = (2E,5E)-tetradecadienoyl-CoA + reduced [electron-transfer flavoprotein]. The enzyme catalyses (5Z)-tetradecenoyl-CoA + oxidized [electron-transfer flavoprotein] + H(+) = (2E,5Z)-tetradecadienoyl-CoA + reduced [electron-transfer flavoprotein]. It catalyses the reaction oxidized [electron-transfer flavoprotein] + (9Z)-octadecenoyl-CoA + H(+) = (2E,9Z)-octadecadienoyl-CoA + reduced [electron-transfer flavoprotein]. It carries out the reaction hexanoyl-CoA + oxidized [electron-transfer flavoprotein] + H(+) = (2E)-hexenoyl-CoA + reduced [electron-transfer flavoprotein]. The catalysed reaction is eicosanoyl-CoA + oxidized [electron-transfer flavoprotein] + H(+) = (2E)-eicosenoyl-CoA + reduced [electron-transfer flavoprotein]. The enzyme catalyses docosanoyl-CoA + oxidized [electron-transfer flavoprotein] + H(+) = (2E)-docosenoyl-CoA + reduced [electron-transfer flavoprotein]. It catalyses the reaction tetracosanoyl-CoA + oxidized [electron-transfer flavoprotein] + H(+) = (2E)-tetracosenoyl-CoA + reduced [electron-transfer flavoprotein]. Its pathway is lipid metabolism; mitochondrial fatty acid beta-oxidation. Its activity is regulated as follows. Inhibited by crotonyl-CoA, 2-octenoyl-CoA and 2-hexadecenoyl-CoA. Long-chain specific acyl-CoA dehydrogenase is one of the acyl-CoA dehydrogenases that catalyze the first step of mitochondrial fatty acid beta-oxidation, an aerobic process breaking down fatty acids into acetyl-CoA and allowing the production of energy from fats. The first step of fatty acid beta-oxidation consists in the removal of one hydrogen from C-2 and C-3 of the straight-chain fatty acyl-CoA thioester, resulting in the formation of trans-2-enoyl-CoA. Among the different mitochondrial acyl-CoA dehydrogenases, long-chain specific acyl-CoA dehydrogenase can act on saturated and unsaturated acyl-CoAs with 6 to 24 carbons with a preference for 8 to 18 carbons long primary chains. This chain is Long-chain specific acyl-CoA dehydrogenase, mitochondrial, found in Rattus norvegicus (Rat).